The primary structure comprises 550 residues: Centrosomal and chromosomal factor (550 aa).

Coiled-coil stretches lie at residues 20-44 (SALSALQQQQQQQQQQHSQTQQQHH), 105-126 (VANSRQQQQQQQQQQQQQQQQQ), and 239-274 (ATSAQQQQQQQQRYQQQQQQLRQQHQQMSQMSQQAH). Disordered regions lie at residues 21 to 145 (ALSA…KDYS), 208 to 320 (LSSG…HAAN), 361 to 380 (SHYAAKGSGGGAGGGKRDAM), and 392 to 465 (SGKL…SASV). 3 stretches are compositionally biased toward low complexity: residues 24–71 (ALQQ…QQQQ), 81–136 (ANTS…NAAP), and 221–320 (AAVA…HAAN). Low complexity-rich tracts occupy residues 396–412 (QQSQVQQQQPQQQQQHC) and 450–462 (SATPTAGAASGGS).

As to quaternary structure, homodimer. Interacts with esc, Trl, E(z), scm and ph-p in vitro. Found in vivo in an esc-containing complex, which may be the Esc/E(z) complex. Also found in vivo in a Pc-containing complex that may be the PRC1 complex, but does not interact with Pc directly. Interacts with cyclin CycG.

The protein resides in the nucleus. It localises to the cytoplasm. It is found in the cytoskeleton. The protein localises to the microtubule organizing center. Its subcellular location is the centrosome. The protein resides in the chromosome. Essential protein required for proper condensation of mitotic chromosomes and progression through mitosis. Binds to specific polytene chromosome sites, many of which are shared with the posterior sex combs (Psc) protein. Involved in maintaining Abd-B repression outside its normal expression domain. The sequence is that of Centrosomal and chromosomal factor (corto) from Drosophila melanogaster (Fruit fly).